The sequence spans 258 residues: Pimeloyl-[acyl-carrier protein] methyl ester esterase (258 aa).

The AB hydrolase-1 domain maps to 16-242; the sequence is LVLLHGWGLN…AAHAPFISHP (227 aa). Substrate is bound by residues Trp22, 82-83, and 143-147; these read SL and FLALQ. Ser82 functions as the Nucleophile in the catalytic mechanism. Catalysis depends on residues Asp207 and His235. His235 is a binding site for substrate.

This sequence belongs to the AB hydrolase superfamily. Carboxylesterase BioH family. As to quaternary structure, monomer.

The protein localises to the cytoplasm. The catalysed reaction is 6-carboxyhexanoyl-[ACP] methyl ester + H2O = 6-carboxyhexanoyl-[ACP] + methanol + H(+). It participates in cofactor biosynthesis; biotin biosynthesis. Functionally, the physiological role of BioH is to remove the methyl group introduced by BioC when the pimeloyl moiety is complete. It allows to synthesize pimeloyl-ACP via the fatty acid synthetic pathway through the hydrolysis of the ester bonds of pimeloyl-ACP esters. In Edwardsiella ictaluri (strain 93-146), this protein is Pimeloyl-[acyl-carrier protein] methyl ester esterase.